Reading from the N-terminus, the 347-residue chain is tRNA N6-adenosine threonylcarbamoyltransferase (347 aa).

2 residues coordinate Fe cation: histidine 113 and histidine 117. Residues 136–140, aspartate 170, glycine 183, aspartate 187, and asparagine 282 contribute to the substrate site; that span reads IVSGG. Aspartate 310 is a binding site for Fe cation.

It belongs to the KAE1 / TsaD family. Fe(2+) is required as a cofactor.

The protein localises to the cytoplasm. It catalyses the reaction L-threonylcarbamoyladenylate + adenosine(37) in tRNA = N(6)-L-threonylcarbamoyladenosine(37) in tRNA + AMP + H(+). Functionally, required for the formation of a threonylcarbamoyl group on adenosine at position 37 (t(6)A37) in tRNAs that read codons beginning with adenine. Is involved in the transfer of the threonylcarbamoyl moiety of threonylcarbamoyl-AMP (TC-AMP) to the N6 group of A37, together with TsaE and TsaB. TsaD likely plays a direct catalytic role in this reaction. In Bifidobacterium longum (strain NCC 2705), this protein is tRNA N6-adenosine threonylcarbamoyltransferase.